The following is a 379-amino-acid chain: GDP-mannose transporter 1 (379 aa).

Topologically, residues 1–39 (MTDNRKPEDYTIEMDKLGQNKNYQAPPPPPQPRSSTASS) are cytoplasmic. Positions 17–38 (LGQNKNYQAPPPPPQPRSSTAS) are disordered. Residues 40–60 (ISNNAALSVLAYCGSSILMTV) traverse the membrane as a helical segment. The Lumenal portion of the chain corresponds to 61-69 (MNKYVLSSD). A helical membrane pass occupies residues 70 to 90 (FNLNFFLLCVQSLVCIIAIQL). At 91–110 (CKACGLITYRDFNLDEARKW) the chain is on the cytoplasmic side. The helical transmembrane segment at 111-133 (FPITLLLIGMIYTGSKALQFLSI) threads the bilayer. Topologically, residues 134-136 (PVY) are lumenal. A helical transmembrane segment spans residues 137 to 156 (TIFKNLTIILIAYGEVLWFG). The Cytoplasmic segment spans residues 157–162 (GSVTNL). The chain crosses the membrane as a helical span at residues 163–182 (TLFSFGLMVFSSIIAAWADI). Topologically, residues 183-198 (KHAIESSGDATSKVST) are lumenal. Residues 199-219 (LNAGYIWMLINCLCTSSYVLG) form a helical membrane-spanning segment. The Cytoplasmic segment spans residues 220 to 233 (MRKRIKLTNFKDFD). A helical transmembrane segment spans residues 234-254 (TMFYNNLLSIPVLIVCSGILE). Residues 255–272 (DWSPANVARNFPSADRNG) are Lumenal-facing. The chain crosses the membrane as a helical span at residues 273–293 (IMFAMILSGLSTVFISYTSAW). Residues 294 to 301 (CVRVTSST) lie on the Cytoplasmic side of the membrane. Residues 302–322 (TYSMVGALNKLPIALSGLIFF) traverse the membrane as a helical segment. The Lumenal portion of the chain corresponds to 323 to 325 (DAP). Residues 326–346 (VTFPSVSAIMVGFVSGIVYAV) form a helical membrane-spanning segment. At 347–379 (AKIKQNAKPKVGILPTTNPVSASSQSMRDSLRS) the chain is on the cytoplasmic side.

Belongs to the TPT transporter family. SLC35D subfamily. Homooligomer.

Its subcellular location is the golgi apparatus membrane. The protein localises to the cytoplasmic vesicle membrane. It is found in the endoplasmic reticulum membrane. Involved in the import of GDP-mannose from the cytoplasm into the Golgi lumen. This is GDP-mannose transporter 1 (gmt1) from Emericella nidulans (strain FGSC A4 / ATCC 38163 / CBS 112.46 / NRRL 194 / M139) (Aspergillus nidulans).